The primary structure comprises 723 residues: Calpastatin (723 aa).

Disordered regions lie at residues 1 to 402 (MNPT…PGRC) and 422 to 509 (STHS…LPPL). Basic residues predominate over residues 21-30 (PNKKRHKKQA). Residue K32 forms a Glycyl lysine isopeptide (Lys-Gly) (interchain with G-Cter in SUMO2) linkage. Residues 46–84 (VVHEKKTQEVKPKEHTEPKSQPKHPSDTRSKHAPKEKAV) show a composition bias toward basic and acidic residues. K50 is modified (N6-acetyllysine). 2 stretches are compositionally biased toward low complexity: residues 85–94 (SKSSEQPPSE) and 113–125 (SAVPAVAAAASAE). S87 bears the Phosphoserine mark. T137 is modified (phosphothreonine). Acidic residues predominate over residues 157 to 173 (TALDDLIDTLGEPEETK). The Inhibitory domain 1 repeat unit spans residues 171-224 (ETKEDTTTYTGPEVSDPMSSTYIEELGKREVTLPPKYRELLNKEEGIAGPPPDS). Residues 195–216 (ELGKREVTLPPKYRELLNKEEG) are compositionally biased toward basic and acidic residues. Residues S224 and S245 each carry the phosphoserine modification. Composition is skewed to basic and acidic residues over residues 249–263 (DAKKTEKEKSTEEAL) and 306–367 (PRPE…KPLS). Residues 307-359 (RPELDPSSIKEVDEAKAKEEKVKKCGEDEERVPSEYRLKPATDKDGKPLLPEA) form an Inhibitory domain 2 repeat. Phosphoserine is present on residues S367, S369, and S376. Positions 378–396 (DFDRSKCKEKQSKPTEKNR) are enriched in basic and acidic residues. At S443 the chain carries Phosphoserine. Positions 445-504 (GKKEADPEDGKPVEDKVKEKAKEEDREKLGEREETIPPDYRLEEAKDKDGKPLPPKEVKE) are enriched in basic and acidic residues. The stretch at 449–502 (ADPEDGKPVEDKVKEKAKEEDREKLGEREETIPPDYRLEEAKDKDGKPLPPKEV) is one Inhibitory domain 3 repeat. A phosphoserine mark is found at S519 and S530. Residues 547 to 723 (SQTPAPTTQA…KPKADGKSTS (177 aa)) form a disordered region. Low complexity predominate over residues 548 to 560 (QTPAPTTQAAGPP). The span at 562-571 (DSARDNKELD) shows a compositional bias: basic and acidic residues. Phosphoserine occurs at positions 578 and 580. The Inhibitory domain 4 repeat unit spans residues 586–642 (PDPDEHKPVEDKVKEKAKAEHRDKLGERDDTIPPKYQHLLDDNKEGTPGKPKRSESP). Residues 586–643 (PDPDEHKPVEDKVKEKAKAEHRDKLGERDDTIPPKYQHLLDDNKEGTPGKPKRSESPR) show a composition bias toward basic and acidic residues. Polar residues predominate over residues 653 to 670 (NLQVPRTPLTPSQGTWTA). Low complexity predominate over residues 672–690 (PQLQKPQQTQQRTKTRSLL). Over residues 701-723 (KAKDSTKAKEETSKPKADGKSTS) the composition is skewed to basic and acidic residues.

It belongs to the protease inhibitor I27 (calpastatin) family.

Functionally, specific inhibition of calpain (calcium-dependent cysteine protease). Plays a key role in postmortem tenderization of meat and have been proposed to be involved in muscle protein degradation in living tissue. The polypeptide is Calpastatin (CAST) (Ovis aries (Sheep)).